An 890-amino-acid polypeptide reads, in one-letter code: MESAEIRRRWLSFYEERGHTVVPSASLIADDPTLLLVPAGMVPFKPYFLGEVKPPWPRATSVQKCVRTPDIEEVGKTTRHGTFFQMCGNFSFGDYFKEGAITYAWELLTTPQDKGGYGLDPERLWITVYLDDDEAETIWRDKIGVPAERIQRLGKKDNYWSMGVPGPCGPCSEINYDRGPEFGVEGGPAVNDERYVEIWNLVFMQYERGEGTSKDDFEILGDLPQKNIDTGLGMERLAMILQGVQNMYEIDTSMAVIQKATELTGVEYGAAHGSDVSLRVVTDHMRTSVMLIGDGVTPGNEGRGYVLRRIMRRAIRNMRLLGATGPVVKDLVDVVIAMMGQQYPELISDRQRIETVALAEEAAFLKTLKAGTNILDTAVTETKASGGQVLPGDKAFLLHDTWGFPIDLTLEMAAEQGLSVDEDGFRRLMKEQRERAKADAQSKKTGHADLGAYREIADAAGETDFIGYTQTEGESTIVGILVDGVSSPAATEGDEVEIVLDRTPFYAEGGGQIGDTGRIKVESGAIIEVRDCQKPVPGVYVHKGVVQVGEVTVGAKAQVSIDVRRRKAIARAHSATHLTHQALRDALGPTAAQAGSENQPGRFRFDFGSPSAVPTTVMTDVEQQINEVLARDLDVQAEVMSIDEAKKQGAIAEFGEKYGERVRVVTIGDFSKELCGGTHVHNTAQLGLVKLLGESSIGSGVRRIEALVGVDAYNFLAREHTVVAQIQELVKGRPEELPEKVSAMLGKLKDAEKEIERFRAEKVLQAAAGLVDSAKDVRGIALVTGQVPDGTTADDLRRLVLDVRGRIQGGRPAVVALFTTVGGKPLTVIATNEAARERGLKAGDLVRAAAKTLGGGGGGKPDVAQGGGQNPAAIGEAIDAVERLVTETAK.

Positions 573, 577, 675, and 679 each coordinate Zn(2+).

Belongs to the class-II aminoacyl-tRNA synthetase family. Requires Zn(2+) as cofactor.

It localises to the cytoplasm. The catalysed reaction is tRNA(Ala) + L-alanine + ATP = L-alanyl-tRNA(Ala) + AMP + diphosphate. Catalyzes the attachment of alanine to tRNA(Ala) in a two-step reaction: alanine is first activated by ATP to form Ala-AMP and then transferred to the acceptor end of tRNA(Ala). Also edits incorrectly charged Ser-tRNA(Ala) and Gly-tRNA(Ala) via its editing domain. The protein is Alanine--tRNA ligase of Streptomyces avermitilis (strain ATCC 31267 / DSM 46492 / JCM 5070 / NBRC 14893 / NCIMB 12804 / NRRL 8165 / MA-4680).